Consider the following 171-residue polypeptide: MLP-like protein 31 (171 aa).

The protein belongs to the MLP family.

The polypeptide is MLP-like protein 31 (MLP31) (Arabidopsis thaliana (Mouse-ear cress)).